Consider the following 784-residue polypeptide: PWWP domain-containing protein 2A (784 aa).

Disordered regions lie at residues 1-32 (MAAVAGAPGPGEGGESEQDSETIPGERRLGRL), 244-272 (KPVESIQEESKSFHEEPLVKSEENSPEDV), 463-567 (AKEK…EMQD), and 605-654 (SSSA…SSKE). A compositionally biased stretch (basic and acidic residues) spans 244–266 (KPVESIQEESKSFHEEPLVKSEE). Residues 536-556 (TRYSATRSAGETPSEIQSPSN) are compositionally biased toward polar residues. The span at 605 to 614 (SSSASVCSSD) shows a compositional bias: low complexity. The 61-residue stretch at 684–744 (VGDIVWAKIY…LSQLTPFLEN (61 aa)) folds into the PWWP domain.

Its subcellular location is the nucleus. Its function is as follows. H2A.Z-specific chromatin binding protein which plays an important role in the neural crest cell differentiation and/or migration during early development and is essential for the development of the head and eye. Acts as an adapter between distinct nucleosome components (H3K36me3 or H2A.Z) and chromatin-modifying complexes, contributing to the regulation of the levels of histone acetylation at actively transcribed genes. The protein is PWWP domain-containing protein 2A (pwwp2a) of Xenopus tropicalis (Western clawed frog).